Consider the following 157-residue polypeptide: Transcription elongation factor GreA (157 aa).

The protein belongs to the GreA/GreB family.

Functionally, necessary for efficient RNA polymerase transcription elongation past template-encoded arresting sites. The arresting sites in DNA have the property of trapping a certain fraction of elongating RNA polymerases that pass through, resulting in locked ternary complexes. Cleavage of the nascent transcript by cleavage factors such as GreA or GreB allows the resumption of elongation from the new 3'terminus. GreA releases sequences of 2 to 3 nucleotides. The chain is Transcription elongation factor GreA from Azorhizobium caulinodans (strain ATCC 43989 / DSM 5975 / JCM 20966 / LMG 6465 / NBRC 14845 / NCIMB 13405 / ORS 571).